Consider the following 627-residue polypeptide: BEL1-like homeodomain protein 4 (627 aa).

A disordered region spans residues Ser206–Pro225. The segment covering Val215 to Pro225 has biased composition (low complexity). The tract at residues Ser241–Val257 is SR/KY domain. A disordered region spans residues Lys263 to Gln307. Residues Asp302–Leu373 form a BELL domain region. Residues Ala424 to Met486 constitute a DNA-binding region (homeobox). The tract at residues Glu494 to Asn530 is disordered. A compositionally biased stretch (low complexity) spans Asn507 to Asn530.

Belongs to the TALE/BELL homeobox family. In terms of assembly, may form heterodimeric complexes with TALE/KNOX proteins. Interacts with OFP1, OFP2 and OFP5. Interacts with KNATM, isoform KNATM-B. In terms of tissue distribution, expressed in lateral organs.

The protein localises to the nucleus. Its function is as follows. Transcription factor that establishes leaf shape by repressing growth in specific subdomains of the leaf. Negatively regulates knox homeobox gene KNAT1/BP expression. The sequence is that of BEL1-like homeodomain protein 4 (BLH4) from Arabidopsis thaliana (Mouse-ear cress).